Here is a 559-residue protein sequence, read N- to C-terminus: Coiled-coil domain-containing protein 63 (559 aa).

Coiled coils occupy residues 14-70 (ELSE…QAET), 185-261 (EKAA…KLKS), and 364-414 (QQQS…VEKL).

Plays a role in spermiogenesis. Involved in the elongation of flagella and the formation of sperm heads. The protein is Coiled-coil domain-containing protein 63 of Rattus norvegicus (Rat).